A 125-amino-acid polypeptide reads, in one-letter code: Sulfiredoxin, chloroplastic/mitochondrial (125 aa).

A chloroplast and mitochondrion-targeting transit peptide spans 1–22 (MANLMMRLPISLRSFSVSASSS).

This sequence belongs to the sulfiredoxin family. In terms of tissue distribution, low expression in photosynthetic tissues such as leaves and sepals.

Its subcellular location is the plastid. The protein resides in the chloroplast. The protein localises to the mitochondrion. It carries out the reaction S-hydroxy-S-oxy-L-cysteinyl-[peroxiredoxin] + [protein]-dithiol + ATP = S-hydroxy-L-cysteinyl-[peroxiredoxin] + [protein]-disulfide + ADP + phosphate. Contributes to oxidative stress resistance by reducing cysteine-sulfinic acid formed under exposure to oxidants in a peroxiredoxin. May catalyze the reduction in a multi-step process by acting both as a specific phosphotransferase and a thioltransferase. Required to switch on the antioxidant pathway to regenerate the oxidative damage. In mitochondrion, catalyzes the retroreduction of the inactive sulfinic form of atypical Prx IIF using thioredoxin as reducing agent. This chain is Sulfiredoxin, chloroplastic/mitochondrial (SRX), found in Arabidopsis thaliana (Mouse-ear cress).